The following is a 390-amino-acid chain: Aspergillopepsin-1 (390 aa).

A signal peptide spans 1 to 19 (MVNTSLLAALTAYAVAVSA). Residues 20–67 (APTAPQVKGFSVNQVAVPKGVYRHPAAQLAKAYGKYHATVPTQVAAAA) constitute a propeptide, activation peptide. Residue Thr-70 is glycosylated (O-linked (Man...) threonine). The region spanning 84-387 (YITQVTVGDD…DASGPRLGFA (304 aa)) is the Peptidase A1 domain. Residues Asp-100 and Asp-281 contribute to the active site.

It belongs to the peptidase A1 family.

The protein resides in the secreted. It carries out the reaction Hydrolysis of proteins with broad specificity. Generally favors hydrophobic residues in P1 and P1', but also accepts Lys in P1, which leads to activation of trypsinogen. Does not clot milk.. With respect to regulation, inhibited by the microbial peptide pepstatin. Its function is as follows. Secreted aspartic endopeptidase that allows assimilation of proteinaceous substrates. The scissile peptide bond is attacked by a nucleophilic water molecule activated by two aspartic residues in the active site. Shows a broad primary substrate specificity. Favors hydrophobic residues at the P1 and P1' positions, but also accepts a lysine residue in the P1 position, leading to the activation of trypsinogen and chymotrypsinogen A. In Aspergillus oryzae (Yellow koji mold), this protein is Aspergillopepsin-1 (pepA).